The primary structure comprises 446 residues: Na(+)-translocating NADH-quinone reductase subunit A (446 aa).

This sequence belongs to the NqrA family. As to quaternary structure, composed of six subunits; NqrA, NqrB, NqrC, NqrD, NqrE and NqrF.

The enzyme catalyses a ubiquinone + n Na(+)(in) + NADH + H(+) = a ubiquinol + n Na(+)(out) + NAD(+). Its function is as follows. NQR complex catalyzes the reduction of ubiquinone-1 to ubiquinol by two successive reactions, coupled with the transport of Na(+) ions from the cytoplasm to the periplasm. NqrA to NqrE are probably involved in the second step, the conversion of ubisemiquinone to ubiquinol. This Vibrio vulnificus (strain CMCP6) protein is Na(+)-translocating NADH-quinone reductase subunit A.